The following is an 81-amino-acid chain: MLILTRKKDEAIIIDDKIKVKVVEIDGNKIKLGIEAPDDVTIHREEVLKEILKENKQALKQKRVLNRDYTSRIKEFIAKKG.

It belongs to the CsrA/RsmA family. In terms of assembly, homodimer; the beta-strands of each monomer intercalate to form a hydrophobic core, while the alpha-helices form wings that extend away from the core.

The protein localises to the cytoplasm. Its function is as follows. A translational regulator that binds mRNA to regulate translation initiation and/or mRNA stability. Usually binds in the 5'-UTR at or near the Shine-Dalgarno sequence preventing ribosome-binding, thus repressing translation. Its main target seems to be the major flagellin gene, while its function is anatagonized by FliW. In Halothermothrix orenii (strain H 168 / OCM 544 / DSM 9562), this protein is Translational regulator CsrA.